The sequence spans 260 residues: Ribosomal RNA small subunit methyltransferase G (260 aa).

Residues Gly-94, Phe-99, 117–119 (DSS), 145–146 (AE), and Arg-164 each bind S-adenosyl-L-methionine.

Belongs to the methyltransferase superfamily. RNA methyltransferase RsmG family.

The protein localises to the cytoplasm. Functionally, specifically methylates the N7 position of a guanine in 16S rRNA. This Synechococcus sp. (strain JA-3-3Ab) (Cyanobacteria bacterium Yellowstone A-Prime) protein is Ribosomal RNA small subunit methyltransferase G.